Reading from the N-terminus, the 86-residue chain is Small ribosomal subunit protein bS20 (86 aa).

The interval 1–25 is disordered; it reads MTNIKSQQKRNRTNERARLRNKSVK.

The protein belongs to the bacterial ribosomal protein bS20 family.

Functionally, binds directly to 16S ribosomal RNA. The protein is Small ribosomal subunit protein bS20 of Mycobacterium leprae (strain Br4923).